Reading from the N-terminus, the 126-residue chain is Aspartate 1-decarboxylase (126 aa).

The active-site Schiff-base intermediate with substrate; via pyruvic acid is the serine 25. Serine 25 is modified (pyruvic acid (Ser)). Threonine 57 serves as a coordination point for substrate. Tyrosine 58 serves as the catalytic Proton donor. Residue 73–75 (GAA) participates in substrate binding.

The protein belongs to the PanD family. As to quaternary structure, heterooctamer of four alpha and four beta subunits. It depends on pyruvate as a cofactor. In terms of processing, is synthesized initially as an inactive proenzyme, which is activated by self-cleavage at a specific serine bond to produce a beta-subunit with a hydroxyl group at its C-terminus and an alpha-subunit with a pyruvoyl group at its N-terminus.

It is found in the cytoplasm. The catalysed reaction is L-aspartate + H(+) = beta-alanine + CO2. It participates in cofactor biosynthesis; (R)-pantothenate biosynthesis; beta-alanine from L-aspartate: step 1/1. Catalyzes the pyruvoyl-dependent decarboxylation of aspartate to produce beta-alanine. In Nitrosococcus oceani (strain ATCC 19707 / BCRC 17464 / JCM 30415 / NCIMB 11848 / C-107), this protein is Aspartate 1-decarboxylase.